The sequence spans 228 residues: 5'-methylthioadenosine/S-adenosylhomocysteine nucleosidase (228 aa).

Glutamate 11 acts as the Proton acceptor in catalysis. Residues glycine 77, isoleucine 151, and 172-173 (ME) each bind substrate. Residue aspartate 196 is the Proton donor of the active site.

The protein belongs to the PNP/UDP phosphorylase family. MtnN subfamily.

The enzyme catalyses S-adenosyl-L-homocysteine + H2O = S-(5-deoxy-D-ribos-5-yl)-L-homocysteine + adenine. It catalyses the reaction S-methyl-5'-thioadenosine + H2O = 5-(methylsulfanyl)-D-ribose + adenine. It carries out the reaction 5'-deoxyadenosine + H2O = 5-deoxy-D-ribose + adenine. Its pathway is amino-acid biosynthesis; L-methionine biosynthesis via salvage pathway; S-methyl-5-thio-alpha-D-ribose 1-phosphate from S-methyl-5'-thioadenosine (hydrolase route): step 1/2. In terms of biological role, catalyzes the irreversible cleavage of the glycosidic bond in both 5'-methylthioadenosine (MTA) and S-adenosylhomocysteine (SAH/AdoHcy) to adenine and the corresponding thioribose, 5'-methylthioribose and S-ribosylhomocysteine, respectively. Also cleaves 5'-deoxyadenosine, a toxic by-product of radical S-adenosylmethionine (SAM) enzymes, into 5-deoxyribose and adenine. In Staphylococcus haemolyticus (strain JCSC1435), this protein is 5'-methylthioadenosine/S-adenosylhomocysteine nucleosidase.